A 145-amino-acid polypeptide reads, in one-letter code: Large ribosomal subunit protein uL13 (145 aa).

Belongs to the universal ribosomal protein uL13 family. In terms of assembly, part of the 50S ribosomal subunit.

Its function is as follows. This protein is one of the early assembly proteins of the 50S ribosomal subunit, although it is not seen to bind rRNA by itself. It is important during the early stages of 50S assembly. This is Large ribosomal subunit protein uL13 from Brevibacillus brevis (strain 47 / JCM 6285 / NBRC 100599).